A 941-amino-acid chain; its full sequence is Endoplasmic reticulum aminopeptidase 1 (941 aa).

Met1 is a topological domain (cytoplasmic). Residues 2-21 (VFLPLKWSLATMSFLLSSLL) traverse the membrane as a helical; Signal-anchor for type II membrane protein segment. Over 22–941 (ALLTVSTPSW…WLQSEKLERM (920 aa)) the chain is Lumenal. 2 N-linked (GlcNAc...) asparagine glycosylation sites follow: Asn70 and Asn154. Residues Glu183 and 317–321 (GAMEN) each bind substrate. His353 lines the Zn(2+) pocket. Glu354 (proton acceptor) is an active-site residue. Positions 357 and 376 each coordinate Zn(2+). 2 cysteine pairs are disulfide-bonded: Cys404-Cys443 and Cys736-Cys743. Asn414 is a glycosylation site (N-linked (GlcNAc...) asparagine). Asn760 and Asn901 each carry an N-linked (GlcNAc...) asparagine glycan.

It belongs to the peptidase M1 family. In terms of assembly, monomer. May also exist as a heterodimer; with ERAP2. Interacts with RBMX. The cofactor is Zn(2+). N-glycosylated. Ubiquitous.

It is found in the endoplasmic reticulum membrane. Functionally, aminopeptidase that plays a central role in peptide trimming, a step required for the generation of most HLA class I-binding peptides. Peptide trimming is essential to customize longer precursor peptides to fit them to the correct length required for presentation on MHC class I molecules. Strongly prefers substrates 9-16 residues long. Rapidly degrades 13-mer to a 9-mer and then stops. Preferentially hydrolyzes the residue Leu and peptides with a hydrophobic C-terminus, while it has weak activity toward peptides with charged C-terminus. May play a role in the inactivation of peptide hormones. May be involved in the regulation of blood pressure through the inactivation of angiotensin II and/or the generation of bradykinin in the kidney. The protein is Endoplasmic reticulum aminopeptidase 1 (ERAP1) of Homo sapiens (Human).